The primary structure comprises 180 residues: Large ribosomal subunit protein uL5 (180 aa).

It belongs to the universal ribosomal protein uL5 family. In terms of assembly, part of the 50S ribosomal subunit; part of the 5S rRNA/L5/L18/L25 subcomplex. Contacts the 5S rRNA and the P site tRNA. Forms a bridge to the 30S subunit in the 70S ribosome.

Its function is as follows. This is one of the proteins that bind and probably mediate the attachment of the 5S RNA into the large ribosomal subunit, where it forms part of the central protuberance. In the 70S ribosome it contacts protein S13 of the 30S subunit (bridge B1b), connecting the 2 subunits; this bridge is implicated in subunit movement. Contacts the P site tRNA; the 5S rRNA and some of its associated proteins might help stabilize positioning of ribosome-bound tRNAs. The sequence is that of Large ribosomal subunit protein uL5 from Lactococcus lactis subsp. lactis (strain IL1403) (Streptococcus lactis).